A 382-amino-acid chain; its full sequence is Dual-specificity RNA methyltransferase RlmN (382 aa).

Residue E95 is the Proton acceptor of the active site. The 249-residue stretch at 101–349 folds into the Radical SAM core domain; sequence EETRGTLCVS…TTVRKTRGDD (249 aa). C108 and C354 are disulfide-bonded. [4Fe-4S] cluster-binding residues include C115, C119, and C122. S-adenosyl-L-methionine contacts are provided by residues 180–181, S212, 234–236, and N311; these read GE and SLH. The active-site S-methylcysteine intermediate is C354.

Belongs to the radical SAM superfamily. RlmN family. It depends on [4Fe-4S] cluster as a cofactor.

The protein localises to the cytoplasm. It catalyses the reaction adenosine(2503) in 23S rRNA + 2 reduced [2Fe-2S]-[ferredoxin] + 2 S-adenosyl-L-methionine = 2-methyladenosine(2503) in 23S rRNA + 5'-deoxyadenosine + L-methionine + 2 oxidized [2Fe-2S]-[ferredoxin] + S-adenosyl-L-homocysteine. It carries out the reaction adenosine(37) in tRNA + 2 reduced [2Fe-2S]-[ferredoxin] + 2 S-adenosyl-L-methionine = 2-methyladenosine(37) in tRNA + 5'-deoxyadenosine + L-methionine + 2 oxidized [2Fe-2S]-[ferredoxin] + S-adenosyl-L-homocysteine. Specifically methylates position 2 of adenine 2503 in 23S rRNA and position 2 of adenine 37 in tRNAs. m2A2503 modification seems to play a crucial role in the proofreading step occurring at the peptidyl transferase center and thus would serve to optimize ribosomal fidelity. The sequence is that of Dual-specificity RNA methyltransferase RlmN from Paraburkholderia phymatum (strain DSM 17167 / CIP 108236 / LMG 21445 / STM815) (Burkholderia phymatum).